The primary structure comprises 432 residues: Enolase (432 aa).

Gln167 contributes to the (2R)-2-phosphoglycerate binding site. Glu209 functions as the Proton donor in the catalytic mechanism. The Mg(2+) site is built by Asp246, Glu289, and Asp316. (2R)-2-phosphoglycerate is bound by residues Lys341, Arg370, Ser371, and Lys392. Residue Lys341 is the Proton acceptor of the active site.

This sequence belongs to the enolase family. It depends on Mg(2+) as a cofactor.

It is found in the cytoplasm. It localises to the secreted. The protein localises to the cell surface. The catalysed reaction is (2R)-2-phosphoglycerate = phosphoenolpyruvate + H2O. It functions in the pathway carbohydrate degradation; glycolysis; pyruvate from D-glyceraldehyde 3-phosphate: step 4/5. Catalyzes the reversible conversion of 2-phosphoglycerate (2-PG) into phosphoenolpyruvate (PEP). It is essential for the degradation of carbohydrates via glycolysis. The polypeptide is Enolase (Thermotoga neapolitana (strain ATCC 49049 / DSM 4359 / NBRC 107923 / NS-E)).